The following is a 213-amino-acid chain: Protein-L-isoaspartate O-methyltransferase (213 aa).

Ser-64 is a catalytic residue.

Belongs to the methyltransferase superfamily. L-isoaspartyl/D-aspartyl protein methyltransferase family.

Its subcellular location is the cytoplasm. It catalyses the reaction [protein]-L-isoaspartate + S-adenosyl-L-methionine = [protein]-L-isoaspartate alpha-methyl ester + S-adenosyl-L-homocysteine. Functionally, catalyzes the methyl esterification of L-isoaspartyl residues in peptides and proteins that result from spontaneous decomposition of normal L-aspartyl and L-asparaginyl residues. It plays a role in the repair and/or degradation of damaged proteins. This chain is Protein-L-isoaspartate O-methyltransferase, found in Christiangramia forsetii (strain DSM 17595 / CGMCC 1.15422 / KT0803) (Gramella forsetii).